Reading from the N-terminus, the 423-residue chain is Citrate synthase-like protein clz17 (423 aa).

Residues His-357 and Asp-413 contribute to the active site.

The protein belongs to the citrate synthase family.

It functions in the pathway secondary metabolite biosynthesis. Functionally, citrate synthase-like protein; part of the gene cluster that mediates the biosynthesis of squalestatin S1 (SQS1, also known as zaragozic acid A), a heavily oxidized fungal polyketide that offers potent cholesterol lowering activity by targeting squalene synthase (SS). SQS1 is composed of a 2,8-dioxobicyclic[3.2.1]octane-3,4,5-tricarboxyclic acid core that is connected to two lipophilic polyketide arms. These initial steps feature the priming of an unusual benzoic acid starter unit onto the highly reducing polyketide synthase clz14, followed by oxaloacetate extension and product release to generate a tricarboxylic acid containing product. The phenylalanine ammonia lyase (PAL) clz10 and the acyl-CoA ligase clz12 are involved in transforming phenylalanine into benzoyl-CoA. The citrate synthase-like protein clz17 is involved in connecting the C-alpha-carbons of the hexaketide chain and oxaloacetate to afford the tricarboxylic acid unit. The potential hydrolytic enzymes, clz11 and clz13, are in close proximity to pks2 and may participate in product release. On the other side, the tetraketide arm is synthesized by a the squalestatin tetraketide synthase clz2 and enzymatically esterified to the core in the last biosynthetic step, by the acetyltransferase clz6. The biosynthesis of the tetraketide must involve 3 rounds of chain extension. After the first and second rounds methyl-transfer occurs, and in all rounds of extension the ketoreductase and dehydratase are active. The enoyl reductase and C-MeT of clz2 are not active in the final round of extension. The acetyltransferase clz6 appears to have a broad substrate selectivity for its acyl CoA substrate, allowing the in vitro synthesis of novel squalestatins. The biosynthesis of SQS1 requires several oxidative steps likely performed by oxidoreductases clz3, clz15 and clz16. Finally, in support of the identification of the cluster as being responsible for SQS1 production, the cluster contains a gene encoding a putative squalene synthase (SS) clz20, suggesting a likely mechanism for self-resistance. This Cochliobolus lunatus (Filamentous fungus) protein is Citrate synthase-like protein clz17.